We begin with the raw amino-acid sequence, 65 residues long: Small ribosomal subunit protein bS21 (65 aa).

This sequence belongs to the bacterial ribosomal protein bS21 family.

The sequence is that of Small ribosomal subunit protein bS21 from Geotalea daltonii (strain DSM 22248 / JCM 15807 / FRC-32) (Geobacter daltonii).